The following is a 75-amino-acid chain: Cytochrome c oxidase subunit 6C (75 aa).

Topologically, residues 1–13 (MSSGALTKPQMRG) are mitochondrial matrix. A helical transmembrane segment spans residues 14–54 (LLAKRLRFHIVGAFAVSLGVAAFYKFAVAEPRKKAYADFYR). Residues 55-75 (NYDSMKDFEEMRKAGIFQSAK) lie on the Mitochondrial intermembrane side of the membrane.

This sequence belongs to the cytochrome c oxidase subunit 6c family. As to quaternary structure, component of the cytochrome c oxidase (complex IV, CIV), a multisubunit enzyme composed of 14 subunits. The complex is composed of a catalytic core of 3 subunits MT-CO1, MT-CO2 and MT-CO3, encoded in the mitochondrial DNA, and 11 supernumerary subunits COX4I, COX5A, COX5B, COX6A, COX6B, COX6C, COX7A, COX7B, COX7C, COX8 and NDUFA4, which are encoded in the nuclear genome. The complex exists as a monomer or a dimer and forms supercomplexes (SCs) in the inner mitochondrial membrane with NADH-ubiquinone oxidoreductase (complex I, CI) and ubiquinol-cytochrome c oxidoreductase (cytochrome b-c1 complex, complex III, CIII), resulting in different assemblies (supercomplex SCI(1)III(2)IV(1) and megacomplex MCI(2)III(2)IV(2)).

Its subcellular location is the mitochondrion inner membrane. The protein operates within energy metabolism; oxidative phosphorylation. Component of the cytochrome c oxidase, the last enzyme in the mitochondrial electron transport chain which drives oxidative phosphorylation. The respiratory chain contains 3 multisubunit complexes succinate dehydrogenase (complex II, CII), ubiquinol-cytochrome c oxidoreductase (cytochrome b-c1 complex, complex III, CIII) and cytochrome c oxidase (complex IV, CIV), that cooperate to transfer electrons derived from NADH and succinate to molecular oxygen, creating an electrochemical gradient over the inner membrane that drives transmembrane transport and the ATP synthase. Cytochrome c oxidase is the component of the respiratory chain that catalyzes the reduction of oxygen to water. Electrons originating from reduced cytochrome c in the intermembrane space (IMS) are transferred via the dinuclear copper A center (CU(A)) of subunit 2 and heme A of subunit 1 to the active site in subunit 1, a binuclear center (BNC) formed by heme A3 and copper B (CU(B)). The BNC reduces molecular oxygen to 2 water molecules using 4 electrons from cytochrome c in the IMS and 4 protons from the mitochondrial matrix. This chain is Cytochrome c oxidase subunit 6C (COX6C), found in Carlito syrichta (Philippine tarsier).